Consider the following 1897-residue polypeptide: Spectinabilin polyketide synthase system protein NorA (1897 aa).

A Ketosynthase family 3 (KS3) domain is found at Glu112 to Gln536. Residues Cys283, His418, and His458 each act as for beta-ketoacyl synthase activity in the active site. Positions Ala538 to His563 are disordered. Residues Glu540–Pro553 are compositionally biased toward basic and acidic residues. One can recognise a Malonyl-CoA:ACP transacylase (MAT) domain in the interval Phe644–Ala962. The interval His1012–Pro1139 is N-terminal hotdog fold. Residues His1012–His1289 form the PKS/mFAS DH domain. Catalysis depends on His1045, which acts as the Proton acceptor; for dehydratase activity. The tract at residues Ser1113–Arg1152 is disordered. A C-terminal hotdog fold region spans residues Ala1151–His1289. Asp1211 (proton donor; for dehydratase activity) is an active-site residue. Residues Gly1494–Ala1671 form the Ketoreductase (KR) domain. Positions Ala1777 to Leu1852 constitute a Carrier domain. An O-(pantetheine 4'-phosphoryl)serine modification is found at Ser1812. The segment at Pro1854–Asp1873 is disordered. The span at Ala1862–Gln1871 shows a compositional bias: low complexity.

As to quaternary structure, the spectinabilin polyketide synthase complex is composed of 4 proteins, NorA, NorA', NorB and NorC. The complex comprises 6 modules with a total of 28 catalytic domains catalyzing 7 chain elongations. NorA comprises one module, NorA' two modules, NorB one module and NorC two modules. Pantetheine 4'-phosphate is required as a cofactor.

It carries out the reaction 4-nitrobenzoyl-CoA + 6 (S)-methylmalonyl-CoA + malonyl-CoA + 6 NADPH + 12 H(+) = demethyldeoxyspectinabilin + 7 CO2 + 6 NADP(+) + 8 CoA + 5 H2O. Its pathway is antibiotic biosynthesis. It functions in the pathway polyketide biosynthesis. Component of a type I modular polyketide synthase (PKS) that generates the backbone of the antibiotic spectinabilin (also known as neoaureothin), a nitroaryl-substituted polyketide metabolite. This PKS system accepts the unusual starter unit 4-nitrobenzoyl-CoA and extends it by 6 molecules of (S)-methylmalonyl-CoA and a single molecule of malonyl-CoA. The first module, NorA, is used twice in an iterative fashion. The polypeptide is Spectinabilin polyketide synthase system protein NorA (Streptomyces orinoci (Streptoverticillium orinoci)).